The following is a 342-amino-acid chain: Holliday junction branch migration complex subunit RuvB (342 aa).

Positions 1-181 are large ATPase domain (RuvB-L); sequence MENRMVTPFD…FGMLCAMEFY (181 aa). ATP contacts are provided by residues Leu-20, Arg-21, Gly-62, Lys-65, Thr-66, Thr-67, 128–130, Arg-171, Tyr-181, and Arg-218; that span reads EDY. A Mg(2+)-binding site is contributed by Thr-66. The interval 182–252 is small ATPAse domain (RuvB-S); it reads TDEELMEIVV…GAKAALDLLE (71 aa). The head domain (RuvB-H) stretch occupies residues 255–342; the sequence is KEGLDKIDNK…KDNQVSIFNK (88 aa). Positions 310 and 315 each coordinate DNA.

Belongs to the RuvB family. In terms of assembly, homohexamer. Forms an RuvA(8)-RuvB(12)-Holliday junction (HJ) complex. HJ DNA is sandwiched between 2 RuvA tetramers; dsDNA enters through RuvA and exits via RuvB. An RuvB hexamer assembles on each DNA strand where it exits the tetramer. Each RuvB hexamer is contacted by two RuvA subunits (via domain III) on 2 adjacent RuvB subunits; this complex drives branch migration. In the full resolvosome a probable DNA-RuvA(4)-RuvB(12)-RuvC(2) complex forms which resolves the HJ.

The protein localises to the cytoplasm. It carries out the reaction ATP + H2O = ADP + phosphate + H(+). Functionally, the RuvA-RuvB-RuvC complex processes Holliday junction (HJ) DNA during genetic recombination and DNA repair, while the RuvA-RuvB complex plays an important role in the rescue of blocked DNA replication forks via replication fork reversal (RFR). RuvA specifically binds to HJ cruciform DNA, conferring on it an open structure. The RuvB hexamer acts as an ATP-dependent pump, pulling dsDNA into and through the RuvAB complex. RuvB forms 2 homohexamers on either side of HJ DNA bound by 1 or 2 RuvA tetramers; 4 subunits per hexamer contact DNA at a time. Coordinated motions by a converter formed by DNA-disengaged RuvB subunits stimulates ATP hydrolysis and nucleotide exchange. Immobilization of the converter enables RuvB to convert the ATP-contained energy into a lever motion, pulling 2 nucleotides of DNA out of the RuvA tetramer per ATP hydrolyzed, thus driving DNA branch migration. The RuvB motors rotate together with the DNA substrate, which together with the progressing nucleotide cycle form the mechanistic basis for DNA recombination by continuous HJ branch migration. Branch migration allows RuvC to scan DNA until it finds its consensus sequence, where it cleaves and resolves cruciform DNA. This Clostridium botulinum (strain Loch Maree / Type A3) protein is Holliday junction branch migration complex subunit RuvB.